The chain runs to 341 residues: uncharacterized protein (341 aa).

The next 10 membrane-spanning stretches (helical) occupy residues 10–30, 42–62, 107–127, 129–149, 155–175, 192–212, 226–246, 263–283, 290–310, and 313–333; these read ALGV…SFLT, PFLI…PWYF, LGFC…LGFT, VASF…LGTI, FTLS…IVVT, ALGN…SVMV, LFFG…LIIL, LIVL…WVIA, LLVT…DILL, and HYLN…FIVV.

The protein belongs to the TPT transporter family.

The protein localises to the vacuole membrane. The protein resides in the golgi apparatus membrane. This is an uncharacterized protein from Schizosaccharomyces pombe (strain 972 / ATCC 24843) (Fission yeast).